We begin with the raw amino-acid sequence, 243 residues long: Ras-related protein Rab-12 (243 aa).

Met1 carries the N-acetylmethionine modification. Residues 1-36 are disordered; the sequence is MDPSAALHRRPAGGGLGAVSPALSGGQARRRKQPPR. Ser20 and Ser24 each carry phosphoserine. GTP is bound by residues Gly51, Val52, Gly53, Lys54, Thr55, Ser72, and Thr73. Residue Thr55 coordinates Mg(2+). 2 consecutive short sequence motifs (switch) follow at residues 64-78 and 96-113; these read DTFCEACKSTVGVDF and DTAGQERFNSITSAYYRS. Residues Thr73 and Asp96 each coordinate Mg(2+). Gly99 lines the GTP pocket. Position 105 is a phosphoserine (Ser105). GTP contacts are provided by Asn154, Lys155, Asp157, Ser185, Ala186, and Lys187. Residues Cys242 and Cys243 are each lipidated (S-geranylgeranyl cysteine).

This sequence belongs to the small GTPase superfamily. Rab family. In terms of assembly, interacts with RABIF and OPTN. Interacts with LRRK2; interaction facilitates phosphorylation of Ser-105. Interacts with GDI1, GDI2 and CHM; these interactions are disrupted by phosphorylation on Ser-105. Interacts with RILPL1 and RILPL2; these interactions are dependent on phosphorylation of Ser-105. The cofactor is Mg(2+). Post-translationally, phosphorylation of Ser-105 in the switch II region by LRRK2 prevents the association of RAB regulatory proteins, including CHM and RAB GDP dissociation inhibitors GDI1 and GDI2. In terms of tissue distribution, highest levels in skeletal and cardiac muscle. Also found in comparable amounts in brain, spinal cord and lung. Also detected in testis where it is expressed by Sertoli cells of the seminiferous tubules (at protein level).

Its subcellular location is the recycling endosome membrane. It is found in the lysosome membrane. The protein resides in the golgi apparatus membrane. It localises to the cytoplasmic vesicle. The protein localises to the autophagosome. It catalyses the reaction GTP + H2O = GDP + phosphate + H(+). Regulated by guanine nucleotide exchange factors (GEFs) including DENND3 which promote the exchange of bound GDP for free GTP. Regulated by GTPase activating proteins (GAPs) which increase the GTP hydrolysis activity. Inhibited by GDP dissociation inhibitors (GDIs). Its function is as follows. The small GTPases Rab are key regulators of intracellular membrane trafficking, from the formation of transport vesicles to their fusion with membranes. Rabs cycle between an inactive GDP-bound form and an active GTP-bound form that is able to recruit to membranes different sets of downstream effectors directly responsible for vesicle formation, movement, tethering and fusion. RAB12 may play a role in protein transport from recycling endosomes to lysosomes regulating, for instance, the degradation of the transferrin receptor. Involved in autophagy. This Rattus norvegicus (Rat) protein is Ras-related protein Rab-12.